The sequence spans 114 residues: UPF0342 protein NT01CX_2274 (114 aa).

Belongs to the UPF0342 family.

The sequence is that of UPF0342 protein NT01CX_2274 from Clostridium novyi (strain NT).